The primary structure comprises 297 residues: 4,5-DOPA dioxygenase extradiol-like protein (297 aa).

Zn(2+) is bound by residues H30, H82, H205, and H263.

Belongs to the DODA-type extradiol aromatic ring-opening dioxygenase family. Requires Zn(2+) as cofactor.

It is found in the cytoplasm. The protein localises to the nucleus. Functionally, may be involved in the metabolism of aromatic compounds. This chain is 4,5-DOPA dioxygenase extradiol-like protein, found in Schizosaccharomyces pombe (strain 972 / ATCC 24843) (Fission yeast).